A 118-amino-acid chain; its full sequence is UPF0342 protein BCG9842_B4422 (118 aa).

This sequence belongs to the UPF0342 family.

The polypeptide is UPF0342 protein BCG9842_B4422 (Bacillus cereus (strain G9842)).